The chain runs to 133 residues: MVVNDTIADMLTRIRNANLARHQIVQVPATKMTCNMATVLKEEGFVQNFEQMGEGIETHLMISLKYNGKNRQPVITALKRISKPGLRVYANHKELPRVLGGLGIALISTSRGVMTDRQARHDGLGGEILCYIW.

Belongs to the universal ribosomal protein uS8 family. Part of the 30S ribosomal subunit.

It localises to the plastid. Its subcellular location is the chloroplast. Functionally, one of the primary rRNA binding proteins, it binds directly to 16S rRNA central domain where it helps coordinate assembly of the platform of the 30S subunit. This chain is Small ribosomal subunit protein uS8c (rps8), found in Pyropia yezoensis (Susabi-nori).